A 791-amino-acid polypeptide reads, in one-letter code: Probable phosphoketolase (791 aa).

Belongs to the XFP family. Thiamine diphosphate serves as cofactor.

The protein is Probable phosphoketolase of Pseudomonas putida (strain ATCC 700007 / DSM 6899 / JCM 31910 / BCRC 17059 / LMG 24140 / F1).